Consider the following 112-residue polypeptide: Protein Tat (112 aa).

Residues 1–24 (MDPVDPEMPPWHHPGSKPQTPCNN) are interaction with human CREBBP. A transactivation region spans residues 1-48 (MDPVDPEMPPWHHPGSKPQTPCNNCYCKRCCYHCYVCFTKKGLGISHG). 3 residues coordinate Zn(2+): Cys-22, Cys-25, and Cys-27. Positions 22–37 (CNNCYCKRCCYHCYVC) are cysteine-rich. Lys-28 carries the post-translational modification N6-acetyllysine; by host PCAF. Zn(2+)-binding residues include Cys-30, His-33, Cys-34, and Cys-37. The core stretch occupies residues 38 to 48 (FTKKGLGISHG). A disordered region spans residues 45 to 112 (ISHGRKKRRR…CNSCTRISGQ (68 aa)). A Nuclear localization signal, RNA-binding (TAR), and protein transduction motif is present at residues 49-56 (RKKRRRPA). The interaction with the host capping enzyme RNGTT stretch occupies residues 49–82 (RKKRRRPAAAASYPDNKDPVPEQHTGRKQKRQEE). Lys-50 and Lys-51 each carry N6-acetyllysine; by host EP300 and GCN5L2. Asymmetric dimethylarginine; by host PRMT6 occurs at positions 52 and 53. The span at 63–91 (DNKDPVPEQHTGRKQKRQEEQEKKVEKET) shows a compositional bias: basic and acidic residues. Over residues 93–112 (PSGQPCHQDSCNSCTRISGQ) the composition is skewed to polar residues.

Belongs to the lentiviruses Tat family. As to quaternary structure, interacts with host CCNT1. Associates with the P-TEFb complex composed at least of Tat, P-TEFb (CDK9 and CCNT1), TAR RNA, RNA Pol II. Recruits the HATs CREBBP, TAF1/TFIID, EP300, PCAF and GCN5L2. Interacts with host KAT5/Tip60; this interaction targets the latter to degradation. Interacts with the host deacetylase SIRT1. Interacts with host capping enzyme RNGTT; this interaction stimulates RNGTT. Binds to host KDR, and to the host integrins ITGAV/ITGB3 and ITGA5/ITGB1. Interacts with host KPNB1/importin beta-1 without previous binding to KPNA1/importin alpha-1. Interacts with EIF2AK2. Interacts with host nucleosome assembly protein NAP1L1; this interaction may be required for the transport of Tat within the nucleus, since the two proteins interact at the nuclear rim. Interacts with host C1QBP/SF2P32; this interaction involves lysine-acetylated Tat. Interacts with the host chemokine receptors CCR2, CCR3 and CXCR4. Interacts with host DPP4/CD26; this interaction may trigger an anti-proliferative effect. Interacts with host LDLR. Interacts with the host extracellular matrix metalloproteinase MMP1. Interacts with host PRMT6; this interaction mediates Tat's methylation. Interacts with, and is ubiquitinated by MDM2/Hdm2. Interacts with host PSMC3 and HTATIP2. Interacts with STAB1; this interaction may overcome SATB1-mediated repression of IL2 and IL2RA (interleukin) in T cells by binding to the same domain than HDAC1. Interacts (when acetylated) with human CDK13, thereby increasing HIV-1 mRNA splicing and promoting the production of the doubly spliced HIV-1 protein Nef. Interacts with host TBP; this interaction modulates the activity of transcriptional pre-initiation complex. Interacts with host RELA. Interacts with host PLSCR1; this interaction negatively regulates Tat transactivation activity by altering its subcellular distribution. In terms of processing, asymmetrical arginine methylation by host PRMT6 seems to diminish the transactivation capacity of Tat and affects the interaction with host CCNT1. Acetylation by EP300, CREBBP, GCN5L2/GCN5 and PCAF regulates the transactivation activity of Tat. EP300-mediated acetylation of Lys-50 promotes dissociation of Tat from the TAR RNA through the competitive binding to PCAF's bromodomain. In addition, the non-acetylated Tat's N-terminus can also interact with PCAF. PCAF-mediated acetylation of Lys-28 enhances Tat's binding to CCNT1. Lys-50 is deacetylated by SIRT1. Post-translationally, polyubiquitination by host MDM2 does not target Tat to degradation, but activates its transactivation function and fosters interaction with CCNT1 and TAR RNA. In terms of processing, phosphorylated by EIF2AK2 on serine and threonine residues adjacent to the basic region important for TAR RNA binding and function. Phosphorylation of Tat by EIF2AK2 is dependent on the prior activation of EIF2AK2 by dsRNA.

The protein resides in the host nucleus. It is found in the host nucleolus. It localises to the host cytoplasm. The protein localises to the secreted. Transcriptional activator that increases RNA Pol II processivity, thereby increasing the level of full-length viral transcripts. Recognizes a hairpin structure at the 5'-LTR of the nascent viral mRNAs referred to as the transactivation responsive RNA element (TAR) and recruits the cyclin T1-CDK9 complex (P-TEFb complex) that will in turn hyperphosphorylate the RNA polymerase II to allow efficient elongation. The CDK9 component of P-TEFb and other Tat-activated kinases hyperphosphorylate the C-terminus of RNA Pol II that becomes stabilized and much more processive. Other factors such as HTATSF1/Tat-SF1, SUPT5H/SPT5, and HTATIP2 are also important for Tat's function. Besides its effect on RNA Pol II processivity, Tat induces chromatin remodeling of proviral genes by recruiting the histone acetyltransferases (HATs) CREBBP, EP300 and PCAF to the chromatin. This also contributes to the increase in proviral transcription rate, especially when the provirus integrates in transcriptionally silent region of the host genome. To ensure maximal activation of the LTR, Tat mediates nuclear translocation of NF-kappa-B by interacting with host RELA. Through its interaction with host TBP, Tat may also modulate transcription initiation. Tat can reactivate a latently infected cell by penetrating in it and transactivating its LTR promoter. In the cytoplasm, Tat is thought to act as a translational activator of HIV-1 mRNAs. Functionally, extracellular circulating Tat can be endocytosed by surrounding uninfected cells via the binding to several surface receptors such as CD26, CXCR4, heparan sulfate proteoglycans (HSPG) or LDLR. Neurons are rarely infected, but they internalize Tat via their LDLR. Through its interaction with nuclear HATs, Tat is potentially able to control the acetylation-dependent cellular gene expression. Modulates the expression of many cellular genes involved in cell survival, proliferation or in coding for cytokines or cytokine receptors. Tat plays a role in T-cell and neurons apoptosis. Tat induced neurotoxicity and apoptosis probably contribute to neuroAIDS. Circulating Tat also acts as a chemokine-like and/or growth factor-like molecule that binds to specific receptors on the surface of the cells, affecting many cellular pathways. In the vascular system, Tat binds to ITGAV/ITGB3 and ITGA5/ITGB1 integrins dimers at the surface of endothelial cells and competes with bFGF for heparin-binding sites, leading to an excess of soluble bFGF. In Homo sapiens (Human), this protein is Protein Tat.